A 273-amino-acid chain; its full sequence is NH(3)-dependent NAD(+) synthetase (273 aa).

34-41 lines the ATP pocket; it reads GLSGGIDS. Asp-40 contacts Mg(2+). Arg-116 lines the deamido-NAD(+) pocket. ATP is bound at residue Thr-136. Mg(2+) is bound at residue Glu-141. ATP-binding residues include Lys-165 and Ser-187.

The protein belongs to the NAD synthetase family. In terms of assembly, homodimer.

It catalyses the reaction deamido-NAD(+) + NH4(+) + ATP = AMP + diphosphate + NAD(+) + H(+). It functions in the pathway cofactor biosynthesis; NAD(+) biosynthesis; NAD(+) from deamido-NAD(+) (ammonia route): step 1/1. Its function is as follows. Catalyzes the ATP-dependent amidation of deamido-NAD to form NAD. Uses ammonia as a nitrogen source. In Trichlorobacter lovleyi (strain ATCC BAA-1151 / DSM 17278 / SZ) (Geobacter lovleyi), this protein is NH(3)-dependent NAD(+) synthetase.